A 100-amino-acid polypeptide reads, in one-letter code: NADH-quinone oxidoreductase subunit K 1 (100 aa).

The next 3 membrane-spanning stretches (helical) occupy residues 4-24, 29-49, and 60-80; these read LHSY…GVLV, IVIF…FIAL, and IFVF…LALM.

This sequence belongs to the complex I subunit 4L family. NDH-1 is composed of 14 different subunits. Subunits NuoA, H, J, K, L, M, N constitute the membrane sector of the complex.

Its subcellular location is the cell inner membrane. The catalysed reaction is a quinone + NADH + 5 H(+)(in) = a quinol + NAD(+) + 4 H(+)(out). NDH-1 shuttles electrons from NADH, via FMN and iron-sulfur (Fe-S) centers, to quinones in the respiratory chain. The immediate electron acceptor for the enzyme in this species is believed to be ubiquinone. Couples the redox reaction to proton translocation (for every two electrons transferred, four hydrogen ions are translocated across the cytoplasmic membrane), and thus conserves the redox energy in a proton gradient. The protein is NADH-quinone oxidoreductase subunit K 1 of Geobacter sulfurreducens (strain ATCC 51573 / DSM 12127 / PCA).